The primary structure comprises 53 residues: Lupus La protein homolog (53 aa).

The segment covering 1 to 13 (GKVEFQGKKTKFD) has biased composition (basic and acidic residues). A disordered region spans residues 1–53 (GKVEFQGKKTKFDSDDERNENGAAGPVKRAREETDKEEPASKQQKTENGAGDQ). Lys-8 carries the post-translational modification N6-acetyllysine. Thr-10 is modified (phosphothreonine). Ser-14 carries the phosphoserine modification. The segment covering 29-40 (RAREETDKEEPA) has biased composition (basic and acidic residues).

As to quaternary structure, interacts with DDX15. May interact with RUFY1. Phosphorylated.

The protein resides in the nucleus. Its function is as follows. Binds to the 3' poly(U) terminus of nascent RNA polymerase III transcripts, protecting them from exonuclease digestion and facilitating their folding and maturation. The polypeptide is Lupus La protein homolog (SSB) (Oryctolagus cuniculus (Rabbit)).